A 548-amino-acid chain; its full sequence is Multidrug efflux system permease protein Rv1217c (548 aa).

12 helical membrane passes run 39–59, 99–119, 148–168, 178–198, 210–230, 253–273, 313–333, 359–379, 410–430, 450–470, 477–497, and 521–541; these read VSLP…YIAS, GIWK…LTVI, ALLL…LGLL, VAFG…AAVA, AVAF…DAGS, WWVL…AYRL, LLWT…VHGI, AFLA…AVSL, LAMA…AAGL, AAVQ…LFGL, VAWG…LAGF, and VPLL…AMAF.

The complex is probably composed of two ATP-binding proteins (Rv1218c) and a transmembrane protein (Rv1217c).

Its subcellular location is the cell inner membrane. Probably part of the ABC transporter complex Rv1217c-Rv1218c involved in the resistance to a wide range of structurally unrelated drugs. Probably responsible for the translocation of the substrate across the membrane. This is Multidrug efflux system permease protein Rv1217c from Mycobacterium tuberculosis (strain ATCC 25618 / H37Rv).